Consider the following 571-residue polypeptide: Leiomodin-3 (571 aa).

3 disordered regions span residues 1 to 29, 46 to 67, and 91 to 228; these read MSGHSRNSEQEDTLSEELDEDELLANLSP, PHLPVGMIQKDQTDKAPTGNFN, and PVSF…AKLD. Residues 10–23 show a composition bias toward acidic residues; sequence QEDTLSEELDEDEL. Polar residues predominate over residues 94-105; sequence FVQSEKNTQNQR. Residues 119 to 134 show a composition bias toward basic and acidic residues; the sequence is LKEKLNSEILAKKRES. Residues 142–179 show a composition bias toward acidic residues; it reads EAEDDDEDEEEEEEDDEDEEEEEEDEEDDEGEEDEDGE. Residues 180–192 show a composition bias toward basic and acidic residues; it reads QANREKNDAKEQI. The span at 193–204 shows a compositional bias: polar residues; it reads HNNPGTYQQLAT. The span at 206 to 228 shows a compositional bias: basic and acidic residues; it reads TAHEQKDTSETKEKGEKKIAKLD. A coiled-coil region spans residues 397 to 436; the sequence is VTNLLTRNQDKRRQKRQEEQQQQQLKEQRKLIAMLENGLG. Residues 545–564 enclose the WH2 domain; it reads PRDQLLNDIRHSNVAYLKPV.

Belongs to the tropomodulin family. As to quaternary structure, may interact with tropomyosin alpha (TPM1/2) N-terminus. Interacts with KLHL40; leading to stabilization. Ubiquitinated, leading to its degradation. Interaction with KLHL40 negatively regulates ubiquitination and degradation. As to expression, skeletal muscle and heart-specific (at protein level).

Its subcellular location is the cytoplasm. It is found in the myofibril. The protein localises to the sarcomere. The protein resides in the a band. It localises to the m line. Its subcellular location is the cytoskeleton. Essential for the organization of sarcomeric actin thin filaments in skeletal muscle. Increases the rate of actin polymerization. This chain is Leiomodin-3, found in Mus musculus (Mouse).